The primary structure comprises 412 residues: Keratin, type I microfibrillar 48 kDa, component 8C-1 (412 aa).

S1 is modified (N-acetylserine). Positions 1–55 are head; it reads SFNFCLPNLSFRSSCSSRPCVPSSCCGTTLPGACNIPANVGSCNWFCEGSFDGNE. An IF rod domain is found at 55-366; that stretch reads EKETMQFLND…GLLDSEDCKL (312 aa). The coil 1A stretch occupies residues 56-90; sequence KETMQFLNDRLASYLEKVRQLERENAELESRILER. The segment at 91-101 is linker 1; it reads SQQQEPLVCPN. The segment at 102 to 202 is coil 1B; the sequence is YQSYFRTIEE…HEEEVNTLRS (101 aa). The segment at 203-218 is linker 12; it reads QLGDRLNVEVDAAPTV. Residues 219–362 form a coil 2 region; it reads DLNRVLNETR…NTYRGLLDSE (144 aa). The segment at 363–412 is tail; the sequence is DCKLPCNPCATTNACGKTITPCISSPCAPAAPCTPCVPRSRCGPCNSYVR.

This sequence belongs to the intermediate filament family.

Functionally, wool microfibrillar keratin. The polypeptide is Keratin, type I microfibrillar 48 kDa, component 8C-1 (Ovis aries (Sheep)).